The primary structure comprises 1441 residues: Protein clueless (1441 aa).

Disordered stretches follow at residues 1–79 (MALD…EAAT) and 106–131 (VAAN…ELES). The span at 8-22 (KNSSSAATGDANTVK) shows a compositional bias: polar residues. Positions 54–63 (AKKKGKKNRN) are enriched in basic residues. 2 stretches are compositionally biased toward low complexity: residues 64–79 (KSPP…EAAT) and 106–126 (VAAN…AASS). The residue at position 273 (S273) is a Phosphoserine. One can recognise a Clu domain in the interval 427-669 (RAEDAFSSKL…RTFPPDVNFL (243 aa)). Basic and acidic residues predominate over residues 726–753 (KKQDEAKEGTKEPASETEKESPPKAITE). Disordered regions lie at residues 726–769 (KKQD…GETK) and 961–1009 (EIHK…SGGT). A compositionally biased stretch (basic residues) spans 964 to 977 (KKRTNTKYNKHKSS). Over residues 978 to 1009 (KSSGSGSKQSGQTSNQNGTSTSPSSSTASGGT) the composition is skewed to low complexity. TPR repeat units lie at residues 1109-1142 (AYNF…LNNV), 1235-1268 (ALID…NLKY), and 1270-1303 (GAKA…EKET).

This sequence belongs to the CLU family.

The protein resides in the cytoplasm. MRNA-binding protein involved in proper cytoplasmic distribution of mitochondria. The protein is Protein clueless of Drosophila willistoni (Fruit fly).